Reading from the N-terminus, the 129-residue chain is Small ribosomal subunit protein uS11 (129 aa).

The protein belongs to the universal ribosomal protein uS11 family. Part of the 30S ribosomal subunit. Interacts with proteins S7 and S18. Binds to IF-3.

Its function is as follows. Located on the platform of the 30S subunit, it bridges several disparate RNA helices of the 16S rRNA. Forms part of the Shine-Dalgarno cleft in the 70S ribosome. The sequence is that of Small ribosomal subunit protein uS11 from Xanthobacter autotrophicus (strain ATCC BAA-1158 / Py2).